The primary structure comprises 274 residues: 3-deoxy-manno-octulosonate cytidylyltransferase (274 aa).

This sequence belongs to the KdsB family.

The protein localises to the cytoplasm. The enzyme catalyses 3-deoxy-alpha-D-manno-oct-2-ulosonate + CTP = CMP-3-deoxy-beta-D-manno-octulosonate + diphosphate. It functions in the pathway nucleotide-sugar biosynthesis; CMP-3-deoxy-D-manno-octulosonate biosynthesis; CMP-3-deoxy-D-manno-octulosonate from 3-deoxy-D-manno-octulosonate and CTP: step 1/1. Its pathway is bacterial outer membrane biogenesis; lipopolysaccharide biosynthesis. In terms of biological role, activates KDO (a required 8-carbon sugar) for incorporation into bacterial lipopolysaccharide in Gram-negative bacteria. The chain is 3-deoxy-manno-octulosonate cytidylyltransferase from Bordetella avium (strain 197N).